Here is a 262-residue protein sequence, read N- to C-terminus: Phosphatidylserine decarboxylase proenzyme (262 aa).

Catalysis depends on charge relay system; for autoendoproteolytic cleavage activity residues Asp-86, His-142, and Ser-226. The Schiff-base intermediate with substrate; via pyruvic acid; for decarboxylase activity role is filled by Ser-226. A Pyruvic acid (Ser); by autocatalysis modification is found at Ser-226.

The protein belongs to the phosphatidylserine decarboxylase family. PSD-B subfamily. Prokaryotic type I sub-subfamily. Heterodimer of a large membrane-associated beta subunit and a small pyruvoyl-containing alpha subunit. Requires pyruvate as cofactor. Is synthesized initially as an inactive proenzyme. Formation of the active enzyme involves a self-maturation process in which the active site pyruvoyl group is generated from an internal serine residue via an autocatalytic post-translational modification. Two non-identical subunits are generated from the proenzyme in this reaction, and the pyruvate is formed at the N-terminus of the alpha chain, which is derived from the carboxyl end of the proenzyme. The autoendoproteolytic cleavage occurs by a canonical serine protease mechanism, in which the side chain hydroxyl group of the serine supplies its oxygen atom to form the C-terminus of the beta chain, while the remainder of the serine residue undergoes an oxidative deamination to produce ammonia and the pyruvoyl prosthetic group on the alpha chain. During this reaction, the Ser that is part of the protease active site of the proenzyme becomes the pyruvoyl prosthetic group, which constitutes an essential element of the active site of the mature decarboxylase.

The protein resides in the cell membrane. It catalyses the reaction a 1,2-diacyl-sn-glycero-3-phospho-L-serine + H(+) = a 1,2-diacyl-sn-glycero-3-phosphoethanolamine + CO2. It participates in phospholipid metabolism; phosphatidylethanolamine biosynthesis; phosphatidylethanolamine from CDP-diacylglycerol: step 2/2. In terms of biological role, catalyzes the formation of phosphatidylethanolamine (PtdEtn) from phosphatidylserine (PtdSer). The sequence is that of Phosphatidylserine decarboxylase proenzyme from Bacillus mycoides (strain KBAB4) (Bacillus weihenstephanensis).